The following is a 253-amino-acid chain: 5'-nucleotidase SurE (253 aa).

Residues aspartate 8, aspartate 9, serine 39, and asparagine 92 each coordinate a divalent metal cation.

This sequence belongs to the SurE nucleotidase family. Requires a divalent metal cation as cofactor.

The protein resides in the cytoplasm. It carries out the reaction a ribonucleoside 5'-phosphate + H2O = a ribonucleoside + phosphate. Its function is as follows. Nucleotidase that shows phosphatase activity on nucleoside 5'-monophosphates. The polypeptide is 5'-nucleotidase SurE (Burkholderia pseudomallei (strain 668)).